Reading from the N-terminus, the 526-residue chain is Probable Xaa-Pro aminopeptidase MGG_05684 (526 aa).

D285, D296, E447, and E488 together coordinate Mn(2+).

This sequence belongs to the peptidase M24B family. It depends on Mn(2+) as a cofactor.

It catalyses the reaction Release of any N-terminal amino acid, including proline, that is linked to proline, even from a dipeptide or tripeptide.. Functionally, catalyzes the removal of a penultimate prolyl residue from the N-termini of peptides. The sequence is that of Probable Xaa-Pro aminopeptidase MGG_05684 from Pyricularia oryzae (strain 70-15 / ATCC MYA-4617 / FGSC 8958) (Rice blast fungus).